The following is a 389-amino-acid chain: Inner membrane transport protein YdhP (389 aa).

Over 1-6 (MKINYP) the chain is Cytoplasmic. The helical transmembrane segment at 7–27 (LLALAIGAFGIGTTEFSPMGL) threads the bilayer. Residues 28-43 (LPVIARGVDVSIPAAG) are Periplasmic-facing. The helical transmembrane segment at 44–64 (MLISAYAVGVMVGAPLMTLLL) threads the bilayer. The Cytoplasmic segment spans residues 65–70 (SHRARR). Residues 71 to 91 (SALIFLMAIFTLGNVLSAIAP) traverse the membrane as a helical segment. The Periplasmic portion of the chain corresponds to 92–100 (DYMTLMLSR). Residues 101-121 (ILTSLNHGAFFGLGSVVAASV) traverse the membrane as a helical segment. Topologically, residues 122–130 (VPKHKQASA) are cytoplasmic. Residues 131 to 151 (VATMFMGLTLANIGGVPAATW) traverse the membrane as a helical segment. At 152–159 (LGETIGWR) the chain is on the periplasmic side. A helical membrane pass occupies residues 160–180 (MSFLATAGLGVISMVSLFFSL). The Cytoplasmic portion of the chain corresponds to 181 to 203 (PKGGAGARPEVKKELAVLMRPQV). A helical membrane pass occupies residues 204-224 (LSALLTTVLGAGAMFTLYTYI). At 225–236 (SPVLQSITHATP) the chain is on the periplasmic side. The helical transmembrane segment at 237–257 (VFVTAMLVLIGVGFSIGNYLG) threads the bilayer. Residues 258 to 266 (GKLADRSVN) are Cytoplasmic-facing. The helical transmembrane segment at 267-287 (GTLKGFLLLLMVIMLAIPFLA) threads the bilayer. The Periplasmic portion of the chain corresponds to 288–290 (RNK). Residues 291 to 311 (FGAAISMAVWGAATFAVVPPL) traverse the membrane as a helical segment. Residues 312 to 330 (QMRVMRVASEAPGLSSSVN) lie on the Cytoplasmic side of the membrane. A helical transmembrane segment spans residues 331 to 351 (IGAFNLGNALGAAAGGAVISA). Residues 352-356 (GLGYS) are Periplasmic-facing. A helical membrane pass occupies residues 357–377 (FVPVMGAIVAGLALLLVFMSA). The Cytoplasmic portion of the chain corresponds to 378–389 (RKQPETVCVANS).

This sequence belongs to the major facilitator superfamily.

The protein resides in the cell inner membrane. The chain is Inner membrane transport protein YdhP (ydhP) from Escherichia coli O157:H7.